A 37-amino-acid polypeptide reads, in one-letter code: Cytochrome b6-f complex subunit 5 (37 aa).

A helical membrane pass occupies residues 5–25; it reads LLSGIILGLIPITICGLFFTA.

The protein belongs to the PetG family. The 4 large subunits of the cytochrome b6-f complex are cytochrome b6, subunit IV (17 kDa polypeptide, PetD), cytochrome f and the Rieske protein, while the 4 small subunits are PetG, PetL, PetM and PetN. The complex functions as a dimer.

The protein localises to the plastid. Its subcellular location is the chloroplast thylakoid membrane. Component of the cytochrome b6-f complex, which mediates electron transfer between photosystem II (PSII) and photosystem I (PSI), cyclic electron flow around PSI, and state transitions. PetG is required for either the stability or assembly of the cytochrome b6-f complex. The chain is Cytochrome b6-f complex subunit 5 from Euglena gracilis.